The sequence spans 263 residues: Lens fiber major intrinsic protein (263 aa).

The Cytoplasmic segment spans residues 1–9 (MWELRSASF). A helical transmembrane segment spans residues 10–29 (WRAIFAEFFATLFYVFFGLG). The Extracellular segment spans residues 30–41 (ASLRWAPGPLHV). The chain crosses the membrane as a helical span at residues 42–59 (LQVALAFGLALAXLVQTV). At 60 to 61 (GH) the chain is on the cytoplasmic side. The segment at residues 62–77 (ISGAHVNPAVTFXFLV) is an intramembrane region (discontinuously helical). Residues 68–70 (NPA) carry the NPA 1 motif. Topologically, residues 78 to 82 (GSQMS) are cytoplasmic. The chain crosses the membrane as a helical span at residues 83–106 (LLRAFCYMAAQLLGAVAGAAVLYS). At 107-127 (VTPPAVRGNLALNTLHAGVSV) the chain is on the extracellular side. A helical transmembrane segment spans residues 128-148 (XQATTVEIFLTLQFVLCIFAT). Topologically, residues 149–156 (YDERRNGR) are cytoplasmic. A helical membrane pass occupies residues 157-175 (LGSVALAVGFSLTLGHLFG). Residues 176–178 (MYY) are Extracellular-facing. The segment at residues 179–193 (TGAGMNPARSFAPAI) is an intramembrane region (discontinuously helical). An NPA 2 motif is present at residues 184-186 (NPA). Residues 194-200 (LTRNFTN) lie on the Extracellular side of the membrane. The helical transmembrane segment at 201–222 (HWVYWVGPIIGGGLGSLLYDFL) threads the bilayer. Residues 223-263 (LFPRLKSVSERLSILKGTRPSDNNGQPEGTGEPVELKTQAL) lie on the Cytoplasmic side of the membrane. Positions 227-237 (LKSVSERLSIL) are interaction with CALM. Serine 235 and serine 243 each carry phosphoserine. Positions 238–263 (KGTRPSDNNGQPEGTGEPVELKTQAL) are disordered. 2 positions are modified to deamidated asparagine; by deterioration: asparagine 245 and asparagine 246.

It belongs to the MIP/aquaporin (TC 1.A.8) family. Homotetramer; each monomer provides an independent water pore. Two homotetramers on opposing membranes can dimerize, forming a cell-cell junction. Interacts with CALM; the calcium-calmodulin/CALM complex interacts with the cytoplasmic domains of two aquaporins, leading to channel closure. Interacts with BFSP1 (via C-terminus); prevents calcium-dependent inhibition of the water channel activity. Post-translationally, subject to partial proteolytic cleavage in the eye lens core. Partial proteolysis promotes interactions between tetramers from adjoining membranes. In terms of processing, fatty acylated at Met-1 and Lys-238. The acyl modifications, in decreasing order of ion abundance, are: oleoyl (C18:1) &gt; palmitoyl (C16:0) &gt; stearoyl (C18:0) &gt; eicosenoyl (C20:1) &gt; dihomo-gamma-linolenoyl (C20:3) &gt; palmitoleoyl (C16:1) &gt; eicosadienoyl (C20:2). In terms of tissue distribution, detected in eye lens (at protein level).

The protein localises to the cell membrane. The protein resides in the cell junction. It carries out the reaction H2O(in) = H2O(out). With respect to regulation, the water channel activity is inhibited by calcium through calmodulin/CALM. Its function is as follows. Aquaporins form homotetrameric transmembrane channels, with each monomer independently mediating water transport across the plasma membrane along its osmotic gradient. Specifically expressed in lens fiber cells, this aquaporin is crucial for maintaining lens water homeostasis and transparency. Beyond water permeability, it also acts as a cell-to-cell adhesion molecule, forming thin junctions between lens fiber cells that are essential for maintaining the ordered structure and transparency of the lens. In Cavia porcellus (Guinea pig), this protein is Lens fiber major intrinsic protein.